Consider the following 102-residue polypeptide: UPF0751 protein DSY4013 (102 aa).

This sequence belongs to the UPF0751 family.

This chain is UPF0751 protein DSY4013, found in Desulfitobacterium hafniense (strain Y51).